A 223-amino-acid chain; its full sequence is Voltage-dependent calcium channel gamma-1 subunit (223 aa).

Over 1–10 (MSQTKTLKVR) the chain is Cytoplasmic. A helical membrane pass occupies residues 11–29 (VALLCILVGIVLALVAVVT). Residues 30–109 (DHWAVLSPHV…TQKEYSISAA (80 aa)) are Extracellular-facing. Asn-43 and Asn-80 each carry an N-linked (GlcNAc...) asparagine glycan. An intrachain disulfide couples Cys-57 to Cys-81. A helical membrane pass occupies residues 110–130 (AIAIFSLGFIIVGTLCALLSF). Over 131 to 135 (RKKRD) the chain is Cytoplasmic. Residues 136 to 156 (YLLRPASMFYIFAGLCLSVSA) traverse the membrane as a helical segment. The Extracellular segment spans residues 157–180 (EVMRQSVQRMVDSEHTAWIAHSLA). The chain crosses the membrane as a helical span at residues 181–205 (WSFICACVAAALLLVGGLALLLLAL). Residues 206-223 (PRMPRDPWESCMDAEPEH) are Cytoplasmic-facing.

This sequence belongs to the PMP-22/EMP/MP20 family. CACNG subfamily. As to quaternary structure, component of a calcium channel complex consisting of a pore-forming alpha subunit (CACNA1S) and the ancillary subunits CACNB1 or CACNB2, CACNG1 and CACNA2D1. The channel complex contains alpha, beta, gamma and delta subunits in a 1:1:1:1 ratio, i.e. it contains either CACNB1 or CACNB2. N-glycosylated.

Its subcellular location is the cell membrane. It is found in the sarcolemma. Functionally, regulatory subunit of the voltage-gated calcium channel that gives rise to L-type calcium currents in skeletal muscle. Regulates channel inactivation kinetics. In Bos taurus (Bovine), this protein is Voltage-dependent calcium channel gamma-1 subunit (CACNG1).